The primary structure comprises 224 residues: tRNA (guanine-N(7)-)-methyltransferase (224 aa).

The S-adenosyl-L-methionine site is built by Glu56, Glu81, Asp108, and Asp131. Asp131 is a catalytic residue. Substrate contacts are provided by residues Lys135, Asp167, and Thr202 to Glu205.

The protein belongs to the class I-like SAM-binding methyltransferase superfamily. TrmB family.

The enzyme catalyses guanosine(46) in tRNA + S-adenosyl-L-methionine = N(7)-methylguanosine(46) in tRNA + S-adenosyl-L-homocysteine. Its pathway is tRNA modification; N(7)-methylguanine-tRNA biosynthesis. Functionally, catalyzes the formation of N(7)-methylguanine at position 46 (m7G46) in tRNA. The polypeptide is tRNA (guanine-N(7)-)-methyltransferase (Nitrosomonas europaea (strain ATCC 19718 / CIP 103999 / KCTC 2705 / NBRC 14298)).